The primary structure comprises 320 residues: Cytochrome f (320 aa).

The first 35 residues, methionine 1–alanine 35, serve as a signal peptide directing secretion. Tyrosine 36, cysteine 56, cysteine 59, and histidine 60 together coordinate heme. The chain crosses the membrane as a helical span at residues valine 286–lysine 306.

The protein belongs to the cytochrome f family. In terms of assembly, the 4 large subunits of the cytochrome b6-f complex are cytochrome b6, subunit IV (17 kDa polypeptide, petD), cytochrome f and the Rieske protein, while the 4 small subunits are PetG, PetL, PetM and PetN. The complex functions as a dimer. The cofactor is heme.

Its subcellular location is the plastid. The protein resides in the chloroplast thylakoid membrane. In terms of biological role, component of the cytochrome b6-f complex, which mediates electron transfer between photosystem II (PSII) and photosystem I (PSI), cyclic electron flow around PSI, and state transitions. This is Cytochrome f from Liriodendron tulipifera (Tuliptree).